A 91-amino-acid polypeptide reads, in one-letter code: Co-chaperonin GroES (91 aa).

Belongs to the GroES chaperonin family. As to quaternary structure, heptamer of 7 subunits arranged in a ring. Interacts with the chaperonin GroEL.

It localises to the cytoplasm. Its function is as follows. Together with the chaperonin GroEL, plays an essential role in assisting protein folding. The GroEL-GroES system forms a nano-cage that allows encapsulation of the non-native substrate proteins and provides a physical environment optimized to promote and accelerate protein folding. GroES binds to the apical surface of the GroEL ring, thereby capping the opening of the GroEL channel. This is Co-chaperonin GroES from Oenococcus oeni (strain ATCC BAA-331 / PSU-1).